Consider the following 333-residue polypeptide: Glycogenin-1 (333 aa).

Thr2 bears the N-acetylthreonine mark. 4 residues coordinate UDP: Leu9, Thr11, Asn12, and Tyr15. UDP-alpha-D-glucose contacts are provided by Leu9, Thr11, Asn12, and Tyr15. Ser44 bears the Phosphoserine mark. Residue Arg77 participates in UDP binding. UDP-alpha-D-glucose-binding residues include Arg77, Lys86, Asp102, Ala103, Asp104, Asn133, Ser134, Asp160, Asp163, and Gln164. UDP-binding residues include Asp102, Ala103, and Asp104. A Mn(2+)-binding site is contributed by Asp102. A Mn(2+)-binding site is contributed by Asp104. Residue Tyr195 is glycosylated (O-linked (Glc...) tyrosine). Residues His212, Gly215, and Lys218 each contribute to the UDP site. Residue His212 participates in Mn(2+) binding. Positions 215 and 218 each coordinate UDP-alpha-D-glucose. An interaction with GYS1 region spans residues 284-316; it reads SDLSFGEAPAAPQPSMSSEERKERWEQGQADYM. Residues 290–316 form a disordered region; the sequence is EAPAAPQPSMSSEERKERWEQGQADYM.

The protein belongs to the glycosyltransferase 8 family. Glycogenin subfamily. In terms of assembly, part of the GYS1-GYG1 complex, a heterooctamer composed of a tetramer of GYS1 and 2 dimers of GYG1, where each GYS1 protomer binds to one GYG1 subunit (via GYG1 C-terminus); the GYS1 tetramer may dissociate from GYG1 dimers to continue glycogen polymerization on its own. May also form a heterooctamer complex with GYS2. Mn(2+) is required as a cofactor. Self-glycosylated by the transfer of glucose residues from UDP-glucose to itself, forming an alpha-1,4-glycan of around 10 residues attached to Tyr-195. Post-translationally, phosphorylated. As to expression, skeletal muscle, heart, to a lesser extent in kidney, lung and brain.

The protein resides in the cytoplasm. It localises to the nucleus. It carries out the reaction L-tyrosyl-[glycogenin] + UDP-alpha-D-glucose = alpha-D-glucosyl-L-tyrosyl-[glycogenin] + UDP + H(+). The enzyme catalyses [1,4-alpha-D-glucosyl](n)-L-tyrosyl-[glycogenin] + UDP-alpha-D-glucose = [1,4-alpha-D-glucosyl](n+1)-L-tyrosyl-[glycogenin] + UDP + H(+). It participates in glycan biosynthesis; glycogen biosynthesis. Functionally, glycogenin participates in the glycogen biosynthetic process along with glycogen synthase and glycogen branching enzyme. It catalyzes the formation of a short alpha (1,4)-glucosyl chain covalently attached via a glucose 1-O-tyrosyl linkage to internal tyrosine residues and these chains act as primers for the elongation reaction catalyzed by glycogen synthase. This is Glycogenin-1 from Mus musculus (Mouse).